The primary structure comprises 128 residues: MSDFNDELVIRCGDTVYSPIVCSVLHPTISAKDEIVMHVDVIHSPPKYRGFANSTRHIMPWRMEHNHKTMSSGLHCTDVLAVEKEALPGAIATFFSSLKTPINITFPDKVHVTREPLKPNDNAHIDEA.

This is an uncharacterized protein from Botryotinia fuckeliana (Noble rot fungus).